A 923-amino-acid polypeptide reads, in one-letter code: Alanine--tRNA ligase (923 aa).

His-614, His-618, Cys-717, and His-721 together coordinate Zn(2+). The interval 884-903 (KVGGGGGGPPDFAQGGGPDA) is disordered. Gly residues predominate over residues 885–901 (VGGGGGGPPDFAQGGGP).

Belongs to the class-II aminoacyl-tRNA synthetase family. Zn(2+) serves as cofactor.

The protein resides in the cytoplasm. It carries out the reaction tRNA(Ala) + L-alanine + ATP = L-alanyl-tRNA(Ala) + AMP + diphosphate. Catalyzes the attachment of alanine to tRNA(Ala) in a two-step reaction: alanine is first activated by ATP to form Ala-AMP and then transferred to the acceptor end of tRNA(Ala). Also edits incorrectly charged Ser-tRNA(Ala) and Gly-tRNA(Ala) via its editing domain. In Haloquadratum walsbyi (strain DSM 16790 / HBSQ001), this protein is Alanine--tRNA ligase.